A 412-amino-acid chain; its full sequence is MEYTTLAVLAGLPEDPHGAVGLPIYAVAAYGFKTLEEGQERFATGEGYVYARQKDPTAKALEERLKALEGALEAVVLASGQAATFAALLALLRPGDEVVAAKGLFGQTIGLFGQVLSLMGVTVRYVDPEPEAVREALSAKTRAVFVETVANPALLVPDLEALATLAEEAGVALVVDNTFGAAGALCRPLAWGAHVVVESLTKWASGHGSVLGGAVLSRETELWRNYPQFLQPDLKGQIPWEALRARCFPERVRTLGLSLCGMALSPFNAYLLFQGLETVALRVARMSETARFLAERLQGHPKVKALRYPGLPEDPAHRNARKYLASGGPILTLDLGDLERASRFLGAIRLLKAANLGDARTLLVHPWTTTHSRLKEEARLQAGVTPGLVRVSVGLEDPLDLLALFEEALEAV.

N6-(pyridoxal phosphate)lysine is present on lysine 202.

The protein belongs to the trans-sulfuration enzymes family. As to quaternary structure, homotetramer. The cofactor is pyridoxal 5'-phosphate.

The enzyme catalyses O-acetyl-L-homoserine + hydrogen sulfide = L-homocysteine + acetate. With respect to regulation, inhibited by the carbonyl reagents hydroxylamine and phenylhydrazine. Also inhibited by methionine and propargylglycine. Functionally, catalyzes the conversion of O-acetyl-L-homoserine (OAH) into homocysteine in the methionine biosynthesis pathway. Has weak activity with O-acetyl-L-serine, O-phospho-L-serine, L-serine, O-succinyl-L-homoserine and L-homoserine. Shows a very low CTT gamma-synthase activity. The protein is O-acetyl-L-homoserine sulfhydrylase 2 of Thermus thermophilus (strain ATCC 27634 / DSM 579 / HB8).